The sequence spans 62 residues: UPF0291 protein CLD_1956 (62 aa).

This sequence belongs to the UPF0291 family.

The protein localises to the cytoplasm. This chain is UPF0291 protein CLD_1956, found in Clostridium botulinum (strain Okra / Type B1).